Here is a 115-residue protein sequence, read N- to C-terminus: NADH-ubiquinone oxidoreductase chain 3 (115 aa).

Transmembrane regions (helical) follow at residues 3 to 23, 55 to 75, and 84 to 104; these read FALI…ITFW, FFLV…LLPL, and LPLM…SLAY.

It belongs to the complex I subunit 3 family. As to quaternary structure, core subunit of respiratory chain NADH dehydrogenase (Complex I) which is composed of 45 different subunits. Interacts with TMEM186. Interacts with TMEM242.

It localises to the mitochondrion inner membrane. The catalysed reaction is a ubiquinone + NADH + 5 H(+)(in) = a ubiquinol + NAD(+) + 4 H(+)(out). Core subunit of the mitochondrial membrane respiratory chain NADH dehydrogenase (Complex I) which catalyzes electron transfer from NADH through the respiratory chain, using ubiquinone as an electron acceptor. Essential for the catalytic activity of complex I. The chain is NADH-ubiquinone oxidoreductase chain 3 from Gorilla gorilla gorilla (Western lowland gorilla).